A 347-amino-acid polypeptide reads, in one-letter code: GMP reductase (347 aa).

Residue 108 to 131 participates in NADP(+) binding; sequence ADFEKTKQILDLNPALNFVCIDVA. 2 residues coordinate K(+): G181 and G183. Residue C186 is the Thioimidate intermediate of the active site. 216-239 provides a ligand contact to NADP(+); it reads IVSDGGCTTPGDVAKAFGGGADFV.

Belongs to the IMPDH/GMPR family. GuaC type 1 subfamily. As to quaternary structure, homotetramer.

The catalysed reaction is IMP + NH4(+) + NADP(+) = GMP + NADPH + 2 H(+). In terms of biological role, catalyzes the irreversible NADPH-dependent deamination of GMP to IMP. It functions in the conversion of nucleobase, nucleoside and nucleotide derivatives of G to A nucleotides, and in maintaining the intracellular balance of A and G nucleotides. In Shigella flexneri serotype 5b (strain 8401), this protein is GMP reductase.